The sequence spans 317 residues: Beta-ketoacyl-[acyl-carrier-protein] synthase III (317 aa).

Catalysis depends on residues C112 and H244. Residues 245 to 249 (QANLR) are ACP-binding. Residue N274 is part of the active site.

This sequence belongs to the thiolase-like superfamily. FabH family. Homodimer.

It localises to the cytoplasm. The catalysed reaction is malonyl-[ACP] + acetyl-CoA + H(+) = 3-oxobutanoyl-[ACP] + CO2 + CoA. It participates in lipid metabolism; fatty acid biosynthesis. Catalyzes the condensation reaction of fatty acid synthesis by the addition to an acyl acceptor of two carbons from malonyl-ACP. Catalyzes the first condensation reaction which initiates fatty acid synthesis and may therefore play a role in governing the total rate of fatty acid production. Possesses both acetoacetyl-ACP synthase and acetyl transacylase activities. Its substrate specificity determines the biosynthesis of branched-chain and/or straight-chain of fatty acids. The protein is Beta-ketoacyl-[acyl-carrier-protein] synthase III of Pasteurella multocida (strain Pm70).